The primary structure comprises 488 residues: Leucine-rich repeat-containing protein 74A (488 aa).

LRR repeat units follow at residues 134-155 (AVTK…SLVE), 162-182 (YLQE…RIIS), 191-212 (SIWS…LLCQ), 219-239 (QIKK…EHLG), 247-268 (GLTS…ALCN), 275-296 (TLTK…ALGE), 303-324 (CLVY…KISK), and 331-351 (SLRV…ILLI).

The sequence is that of Leucine-rich repeat-containing protein 74A from Homo sapiens (Human).